Here is a 218-residue protein sequence, read N- to C-terminus: Thiamine-phosphate synthase (218 aa).

Residues 43–47 (QLRMK) and Asn-75 contribute to the 4-amino-2-methyl-5-(diphosphooxymethyl)pyrimidine site. Residues Asp-76 and Asp-95 each coordinate Mg(2+). Thr-114 contributes to the 4-amino-2-methyl-5-(diphosphooxymethyl)pyrimidine binding site. 140–142 (TST) is a binding site for 2-[(2R,5Z)-2-carboxy-4-methylthiazol-5(2H)-ylidene]ethyl phosphate. Lys-143 lines the 4-amino-2-methyl-5-(diphosphooxymethyl)pyrimidine pocket. Residues Gly-171 and 191 to 192 (VS) contribute to the 2-[(2R,5Z)-2-carboxy-4-methylthiazol-5(2H)-ylidene]ethyl phosphate site.

Belongs to the thiamine-phosphate synthase family. Requires Mg(2+) as cofactor.

The enzyme catalyses 2-[(2R,5Z)-2-carboxy-4-methylthiazol-5(2H)-ylidene]ethyl phosphate + 4-amino-2-methyl-5-(diphosphooxymethyl)pyrimidine + 2 H(+) = thiamine phosphate + CO2 + diphosphate. It catalyses the reaction 2-(2-carboxy-4-methylthiazol-5-yl)ethyl phosphate + 4-amino-2-methyl-5-(diphosphooxymethyl)pyrimidine + 2 H(+) = thiamine phosphate + CO2 + diphosphate. It carries out the reaction 4-methyl-5-(2-phosphooxyethyl)-thiazole + 4-amino-2-methyl-5-(diphosphooxymethyl)pyrimidine + H(+) = thiamine phosphate + diphosphate. It functions in the pathway cofactor biosynthesis; thiamine diphosphate biosynthesis; thiamine phosphate from 4-amino-2-methyl-5-diphosphomethylpyrimidine and 4-methyl-5-(2-phosphoethyl)-thiazole: step 1/1. Functionally, condenses 4-methyl-5-(beta-hydroxyethyl)thiazole monophosphate (THZ-P) and 2-methyl-4-amino-5-hydroxymethyl pyrimidine pyrophosphate (HMP-PP) to form thiamine monophosphate (TMP). This chain is Thiamine-phosphate synthase, found in Myxococcus xanthus (strain DK1622).